The sequence spans 565 residues: Oxygen-dependent choline dehydrogenase (565 aa).

6–35 (DYIIVGAGSAGNTLATRLTEDASVSVLLLE) lines the FAD pocket. Residues 182–203 (QQEGFGPMDRSVTKKGRRSSTA) are disordered. The active-site Proton acceptor is H475.

The protein belongs to the GMC oxidoreductase family. It depends on FAD as a cofactor.

The catalysed reaction is choline + A = betaine aldehyde + AH2. It catalyses the reaction betaine aldehyde + NAD(+) + H2O = glycine betaine + NADH + 2 H(+). The protein operates within amine and polyamine biosynthesis; betaine biosynthesis via choline pathway; betaine aldehyde from choline (cytochrome c reductase route): step 1/1. Functionally, involved in the biosynthesis of the osmoprotectant glycine betaine. Catalyzes the oxidation of choline to betaine aldehyde and betaine aldehyde to glycine betaine at the same rate. In Pseudomonas entomophila (strain L48), this protein is Oxygen-dependent choline dehydrogenase.